A 365-amino-acid polypeptide reads, in one-letter code: Outer membrane lipoprotein A (365 aa).

The N-terminal stretch at 1 to 19 is a signal peptide; the sequence is MNIATKLMASLVASVVLTA. Positions 19–121 are disordered; it reads ACSGGGSSGS…KGEELSKDKS (103 aa). Residue C20 is the site of N-palmitoyl cysteine attachment. A lipid anchor (S-diacylglycerol cysteine) is attached at C20. Basic and acidic residues-rich tracts occupy residues 48-68 and 105-121; these read EQPKKEEVPQADNSKAEEPKE and NPQKDAPKGEELSKDKS.

The protein resides in the cell outer membrane. The chain is Outer membrane lipoprotein A (omlA) from Actinobacillus pleuropneumoniae (Haemophilus pleuropneumoniae).